A 337-amino-acid chain; its full sequence is Lipopolysaccharide 1,3-galactosyltransferase (337 aa).

Residues 33–38 (GIDKNF) and 130–131 (DA) contribute to the UDP site. Mg(2+) is bound by residues D130 and D132. Short sequence motifs (DXD) lie at residues 130 to 132 (DAD) and 219 to 221 (DQD). H264 contributes to the Mg(2+) binding site. 264-270 (HYIGPTK) lines the UDP pocket.

This sequence belongs to the glycosyltransferase 8 family. Mg(2+) is required as a cofactor.

It catalyses the reaction UDP-alpha-D-galactose + [lipopolysaccharide] = UDP + 3-alpha-D-galactosyl-[lipopolysaccharide].. It participates in bacterial outer membrane biogenesis; LPS core biosynthesis. Inhibited in a competitive manner by closely related nonsubstrate lipopolysaccharides. Functionally, galactosyltransferase involved in the biosynthesis of the core oligosaccharide region of lipopolysaccharide (LPS). Catalyzes the addition of an alpha l,3-linked galactose (galactose I) to the first outer-core glucose (glucose I). Cannot use UDP-glucose. Activity probably does not require the branched galactose added by WaaB, but it is higher in the presence of this branched galactose. In Salmonella typhimurium (strain LT2 / SGSC1412 / ATCC 700720), this protein is Lipopolysaccharide 1,3-galactosyltransferase.